Here is a 204-residue protein sequence, read N- to C-terminus: LexA repressor (204 aa).

A DNA-binding region (H-T-H motif) is located at residues 30–50 (IREICQGVGLSSPSTVHHHLK). Active-site for autocatalytic cleavage activity residues include Ser125 and Lys162.

The protein belongs to the peptidase S24 family. Homodimer.

It carries out the reaction Hydrolysis of Ala-|-Gly bond in repressor LexA.. Represses a number of genes involved in the response to DNA damage (SOS response), including recA and lexA. In the presence of single-stranded DNA, RecA interacts with LexA causing an autocatalytic cleavage which disrupts the DNA-binding part of LexA, leading to derepression of the SOS regulon and eventually DNA repair. The chain is LexA repressor from Carboxydothermus hydrogenoformans (strain ATCC BAA-161 / DSM 6008 / Z-2901).